The chain runs to 157 residues: Ribosome maturation factor RimP (157 aa).

Belongs to the RimP family.

Its subcellular location is the cytoplasm. Required for maturation of 30S ribosomal subunits. In Geobacillus sp. (strain WCH70), this protein is Ribosome maturation factor RimP.